We begin with the raw amino-acid sequence, 407 residues long: Phosphoglycerate kinase (407 aa).

Substrate contacts are provided by residues 27 to 29 (DLN), R43, 66 to 69 (HLGR), R125, and R165. Residues K215, G303, E334, and 363 to 366 (GGDS) each bind ATP.

Belongs to the phosphoglycerate kinase family. As to quaternary structure, monomer.

The protein localises to the cytoplasm. It catalyses the reaction (2R)-3-phosphoglycerate + ATP = (2R)-3-phospho-glyceroyl phosphate + ADP. It participates in carbohydrate degradation; glycolysis; pyruvate from D-glyceraldehyde 3-phosphate: step 2/5. The polypeptide is Phosphoglycerate kinase (Mycobacterium sp. (strain JLS)).